Consider the following 345-residue polypeptide: S-adenosylmethionine:tRNA ribosyltransferase-isomerase (345 aa).

It belongs to the QueA family. In terms of assembly, monomer.

It localises to the cytoplasm. It catalyses the reaction 7-aminomethyl-7-carbaguanosine(34) in tRNA + S-adenosyl-L-methionine = epoxyqueuosine(34) in tRNA + adenine + L-methionine + 2 H(+). It functions in the pathway tRNA modification; tRNA-queuosine biosynthesis. Transfers and isomerizes the ribose moiety from AdoMet to the 7-aminomethyl group of 7-deazaguanine (preQ1-tRNA) to give epoxyqueuosine (oQ-tRNA). The protein is S-adenosylmethionine:tRNA ribosyltransferase-isomerase of Thermus thermophilus (strain ATCC BAA-163 / DSM 7039 / HB27).